The primary structure comprises 327 residues: Phenylalanine--tRNA ligase alpha subunit (327 aa).

Residue glutamate 252 participates in Mg(2+) binding.

It belongs to the class-II aminoacyl-tRNA synthetase family. Phe-tRNA synthetase alpha subunit type 1 subfamily. As to quaternary structure, tetramer of two alpha and two beta subunits. The cofactor is Mg(2+).

It is found in the cytoplasm. The enzyme catalyses tRNA(Phe) + L-phenylalanine + ATP = L-phenylalanyl-tRNA(Phe) + AMP + diphosphate + H(+). The sequence is that of Phenylalanine--tRNA ligase alpha subunit from Escherichia coli O139:H28 (strain E24377A / ETEC).